Reading from the N-terminus, the 189-residue chain is Small ribosomal subunit protein uS5 (189 aa).

One can recognise an S5 DRBM domain in the interval 22-85 (LIDKLVTINR…ERAKRGMIRV (64 aa)). The disordered stretch occupies residues 164-189 (SVASRRGKKVADLFGPKREKEAPADV). Residues 172 to 189 (KVADLFGPKREKEAPADV) show a composition bias toward basic and acidic residues.

The protein belongs to the universal ribosomal protein uS5 family. Part of the 30S ribosomal subunit. Contacts proteins S4 and S8.

In terms of biological role, with S4 and S12 plays an important role in translational accuracy. Functionally, located at the back of the 30S subunit body where it stabilizes the conformation of the head with respect to the body. The protein is Small ribosomal subunit protein uS5 of Acidiphilium cryptum (strain JF-5).